The following is a 139-amino-acid chain: Ribulose bisphosphate carboxylase small subunit, chromosomal (139 aa).

The protein belongs to the RuBisCO small chain family. In terms of assembly, heterohexadecamer of 8 large and 8 small subunits.

Functionally, ruBisCO catalyzes two reactions: the carboxylation of D-ribulose 1,5-bisphosphate, the primary event in carbon dioxide fixation, as well as the oxidative fragmentation of the pentose substrate. Both reactions occur simultaneously and in competition at the same active site. Although the small subunit is not catalytic it is essential for maximal activity. This Cupriavidus necator (Alcaligenes eutrophus) protein is Ribulose bisphosphate carboxylase small subunit, chromosomal.